Here is a 349-residue protein sequence, read N- to C-terminus: Phosphate acyltransferase (349 aa).

This sequence belongs to the PlsX family. In terms of assembly, homodimer. Probably interacts with PlsY.

It is found in the cytoplasm. It carries out the reaction a fatty acyl-[ACP] + phosphate = an acyl phosphate + holo-[ACP]. It functions in the pathway lipid metabolism; phospholipid metabolism. Its function is as follows. Catalyzes the reversible formation of acyl-phosphate (acyl-PO(4)) from acyl-[acyl-carrier-protein] (acyl-ACP). This enzyme utilizes acyl-ACP as fatty acyl donor, but not acyl-CoA. This Akkermansia muciniphila (strain ATCC BAA-835 / DSM 22959 / JCM 33894 / BCRC 81048 / CCUG 64013 / CIP 107961 / Muc) protein is Phosphate acyltransferase.